Reading from the N-terminus, the 338-residue chain is D-alanine--D-alanine ligase (338 aa).

The 205-residue stretch at 120 to 324 (KRVMLAEGLP…YEDLCIEVLK (205 aa)) folds into the ATP-grasp domain. An ATP-binding site is contributed by 150–205 (PDKLGLPLIVKPAREGSSIGLTKVTERAGMADAVAQAEKLDADILCEQFISGDEVT). Mg(2+) contacts are provided by Asp277, Glu291, and Asn293.

The protein belongs to the D-alanine--D-alanine ligase family. Mg(2+) is required as a cofactor. It depends on Mn(2+) as a cofactor.

The protein localises to the cytoplasm. It catalyses the reaction 2 D-alanine + ATP = D-alanyl-D-alanine + ADP + phosphate + H(+). It functions in the pathway cell wall biogenesis; peptidoglycan biosynthesis. In terms of biological role, cell wall formation. The protein is D-alanine--D-alanine ligase of Polaromonas sp. (strain JS666 / ATCC BAA-500).